The following is a 270-amino-acid chain: MPQPRKRFAQHWLRSETALEQIIQAANLKKSDRLLEIGPGTGILTRRLLPLVQSLIAVELDWDLCKKLVKSLGDEDNFLLLQGDILKLDIATEAQQFPKFLPINKVVANIPYNITSPILDKLLGRISSPKQPSYDLIVLLIQKEVAQRIIAYPGSKNYGALSIKMQYLADCNYICDVPKKSFYPPPKVDSAVITFRPRSLLNSATNPKYLETLINLGFSSRRKMLRNNLQSLIDRDLLTEFLTEIDLNEQVRAENLDLNQWIALSNYFSQ.

Positions 11, 13, 38, 59, 84, and 109 each coordinate S-adenosyl-L-methionine.

The protein belongs to the class I-like SAM-binding methyltransferase superfamily. rRNA adenine N(6)-methyltransferase family. RsmA subfamily.

Its subcellular location is the cytoplasm. It carries out the reaction adenosine(1518)/adenosine(1519) in 16S rRNA + 4 S-adenosyl-L-methionine = N(6)-dimethyladenosine(1518)/N(6)-dimethyladenosine(1519) in 16S rRNA + 4 S-adenosyl-L-homocysteine + 4 H(+). Its function is as follows. Specifically dimethylates two adjacent adenosines (A1518 and A1519) in the loop of a conserved hairpin near the 3'-end of 16S rRNA in the 30S particle. May play a critical role in biogenesis of 30S subunits. The polypeptide is Ribosomal RNA small subunit methyltransferase A (Crocosphaera subtropica (strain ATCC 51142 / BH68) (Cyanothece sp. (strain ATCC 51142))).